The sequence spans 1120 residues: Mechanosensitive channel MscK (1120 aa).

The N-terminal stretch at 1–33 (MTMFQYYKRSRHFVFSAFIAFVFVLLCQNTAFA) is a signal peptide. The Periplasmic segment spans residues 34–499 (RASSNGDLPT…MKITVNWQKA (466 aa)). Coiled coils occupy residues 43–98 (TKAD…VAEA), 126–266 (STLS…TLTE), and 360–422 (DELE…RREL). Residues 500–520 (WPAVFIAFLAGLPLLLIAGLI) form a helical membrane-spanning segment. Residues 521 to 560 (HWRLGWLKAYQQKLASAVGSLRNDSQLNTPKAILIDLIRA) lie on the Cytoplasmic side of the membrane. A helical membrane pass occupies residues 561-581 (LPVCLIILAVGLILLTMQLNI). A topological domain (periplasmic) is located at residue Ser582. Residues 583 to 603 (ELLWSFSKKLAIFWLVFGLCW) form a helical membrane-spanning segment. The Cytoplasmic segment spans residues 604–634 (KVLEKNGVAVRHFGMPEQQTSHWRRQIVRIS). Residues 635-655 (LALLPIHFWSVVAELSPLHLM) form a helical membrane-spanning segment. The Periplasmic segment spans residues 656–657 (DD). Residues 658–678 (VLGQAMIFFNLLLIAFLVWPM) traverse the membrane as a helical segment. Topologically, residues 679–692 (CRESWRDKESHTMR) are cytoplasmic. The chain crosses the membrane as a helical span at residues 693–713 (LVTITVLSIIPIALMVLTATG). Topologically, residues 714–728 (YFYTTLRLAGRWIET) are periplasmic. A helical transmembrane segment spans residues 729–749 (VYLVIIWNLLYQTVLRGLSVA). Topologically, residues 750–796 (ARRIAWRRALARRQNLVKEGAEGAEPPEEPTIALEQVNQQTLRITML) are cytoplasmic. The helical transmembrane segment at 797-817 (LMFALFGVMFWAIWSDLITVF) threads the bilayer. The Periplasmic portion of the chain corresponds to 818 to 839 (SYLDSITLWHYNGTEAGAAVVK). A helical transmembrane segment spans residues 840-860 (NVTMGSLLFAIIASMVAWALI). At 861 to 886 (RNLPGLLEVLVLSRLNMRQGASYAIT) the chain is on the cytoplasmic side. The chain crosses the membrane as a helical span at residues 887–907 (TILNYIIIAVGAMTVFGSLGV). Over 908–921 (SWDKLQWLAAALSV) the chain is Periplasmic. A helical membrane pass occupies residues 922–942 (GLGFGLQEIFGNFVSGLIILF). At 943–1120 (ERPVRIGDTV…KGDDPTPAVG (178 aa)) the chain is on the cytoplasmic side. Residues 1057–1081 (YVRELRDRSRTVDELNRTIDQLCRE) are a coiled coil.

This sequence belongs to the MscS (TC 1.A.23) family.

The protein resides in the cell inner membrane. Functionally, mechanosensitive channel that opens in response to membrane tension and specific ionic conditions. Requires high concentrations of external K(+), NH(4)(+), Rb(+) or Cs(+) to gate. May participate in the regulation of osmotic pressure changes within the cell, although it does not appear to have a major role in osmolarity regulation. Forms an ion channel of 1.0 nanosiemens conductance. The channel can remain active for between 30 seconds and over 3 minutes; it does not desensitize upon extended pressure. Its activity is masked in wild-type cells by the MscS channel. The protein is Mechanosensitive channel MscK (mscK) of Escherichia coli (strain K12).